Consider the following 553-residue polypeptide: Fusion glycoprotein F0 (553 aa).

The N-terminal stretch at 1–31 is a signal peptide; the sequence is MGSRSSTRIPVPLMLTVRVMLALSCVCPTSA. Residues 32–500 are Extracellular-facing; it reads LDGRPLAAAG…VNVKLTSTSA (469 aa). 4 cysteine pairs are disulfide-bonded: C76-C199, C362-C370, C394-C399, and C401-C424. N-linked (GlcNAc...) asparagine; by host glycosylation is present at N85. The tract at residues 117–141 is fusion peptide; it reads LIGAIIGGVALGVATAAQITAASAL. Residues 142 to 170 adopt a coiled-coil conformation; sequence IQANQNAANILLLKESIAATNEAVHEVTN. N-linked (GlcNAc...) asparagine; by host glycans are attached at residues N191 and N366. N447 and N471 each carry an N-linked (GlcNAc...) asparagine; by host glycan. Residues 466 to 491 adopt a coiled-coil conformation; that stretch reads ELGNVNNSISNALDKLEESNSKLDKV. A helical transmembrane segment spans residues 501–521; that stretch reads LITYIVLTVISLVCGILSLVL. The Cytoplasmic segment spans residues 522 to 553; it reads ACYLMYKQKAQQKTLLWLGNNTLDQMRATTKM. A lipid anchor (S-palmitoyl cysteine; by host) is attached at C523.

This sequence belongs to the paramyxoviruses fusion glycoprotein family. As to quaternary structure, homotrimer of disulfide-linked F1-F2. In terms of processing, the inactive precursor F0 is glycosylated and proteolytically cleaved into F1 and F2 to be functionally active. The cleavage is mediated by cellular proteases during the transport and maturation of the polypeptide.

It localises to the virion membrane. Its subcellular location is the host cell membrane. Functionally, class I viral fusion protein. Under the current model, the protein has at least 3 conformational states: pre-fusion native state, pre-hairpin intermediate state, and post-fusion hairpin state. During viral and plasma cell membrane fusion, the heptad repeat (HR) regions assume a trimer-of-hairpins structure, positioning the fusion peptide in close proximity to the C-terminal region of the ectodomain. The formation of this structure appears to drive apposition and subsequent fusion of viral and plasma cell membranes. Directs fusion of viral and cellular membranes leading to delivery of the nucleocapsid into the cytoplasm. This fusion is pH independent and occurs directly at the outer cell membrane. The trimer of F1-F2 (F protein) probably interacts with HN at the virion surface. Upon HN binding to its cellular receptor, the hydrophobic fusion peptide is unmasked and interacts with the cellular membrane, inducing the fusion between cell and virion membranes. Later in infection, F proteins expressed at the plasma membrane of infected cells could mediate fusion with adjacent cells to form syncytia, a cytopathic effect that could lead to tissue necrosis. This chain is Fusion glycoprotein F0 (F), found in Newcastle disease virus (strain Queensland/66) (NDV).